Consider the following 564-residue polypeptide: Dihydroxy-acid dehydratase (564 aa).

Asp-78 serves as a coordination point for Mg(2+). Cys-119 is a [2Fe-2S] cluster binding site. Asp-120 and Lys-121 together coordinate Mg(2+). N6-carboxylysine is present on Lys-121. Cys-192 contacts [2Fe-2S] cluster. Glu-451 is a binding site for Mg(2+). The active-site Proton acceptor is the Ser-477.

Belongs to the IlvD/Edd family. As to quaternary structure, homodimer. [2Fe-2S] cluster is required as a cofactor. Mg(2+) serves as cofactor.

It catalyses the reaction (2R)-2,3-dihydroxy-3-methylbutanoate = 3-methyl-2-oxobutanoate + H2O. It carries out the reaction (2R,3R)-2,3-dihydroxy-3-methylpentanoate = (S)-3-methyl-2-oxopentanoate + H2O. It participates in amino-acid biosynthesis; L-isoleucine biosynthesis; L-isoleucine from 2-oxobutanoate: step 3/4. It functions in the pathway amino-acid biosynthesis; L-valine biosynthesis; L-valine from pyruvate: step 3/4. Functions in the biosynthesis of branched-chain amino acids. Catalyzes the dehydration of (2R,3R)-2,3-dihydroxy-3-methylpentanoate (2,3-dihydroxy-3-methylvalerate) into 2-oxo-3-methylpentanoate (2-oxo-3-methylvalerate) and of (2R)-2,3-dihydroxy-3-methylbutanoate (2,3-dihydroxyisovalerate) into 2-oxo-3-methylbutanoate (2-oxoisovalerate), the penultimate precursor to L-isoleucine and L-valine, respectively. This is Dihydroxy-acid dehydratase from Nitratiruptor sp. (strain SB155-2).